Here is a 295-residue protein sequence, read N- to C-terminus: Probable endonuclease 4 (295 aa).

Zn(2+) is bound by residues His78, His118, Glu154, Asp188, His191, His225, Asp238, His240, and Glu270.

It belongs to the AP endonuclease 2 family. The cofactor is Zn(2+).

The catalysed reaction is Endonucleolytic cleavage to 5'-phosphooligonucleotide end-products.. Functionally, endonuclease IV plays a role in DNA repair. It cleaves phosphodiester bonds at apurinic or apyrimidinic (AP) sites, generating a 3'-hydroxyl group and a 5'-terminal sugar phosphate. In Vibrio parahaemolyticus serotype O3:K6 (strain RIMD 2210633), this protein is Probable endonuclease 4.